The following is a 368-amino-acid chain: Metacaspase-6 (368 aa).

Active-site residues include His-86 and Cys-139. The residue at position 139 (Cys-139) is an S-nitrosocysteine. The disordered stretch occupies residues 153 to 174 (GESTKKKKDSGDSSTINKETEA).

It belongs to the peptidase C14B family. Proteolytically processed; by an autocatalytic mechanism. Expressed in roots and flower buds.

The sequence is that of Metacaspase-6 (AMC6) from Arabidopsis thaliana (Mouse-ear cress).